A 118-amino-acid chain; its full sequence is DNA-directed RNA polymerase subunit omega (118 aa).

Residues 78–104 (DEPEEDSMAMLMGGGQPDKPAEDDMSE) form a disordered region.

This sequence belongs to the RNA polymerase subunit omega family. In terms of assembly, the RNAP catalytic core consists of 2 alpha, 1 beta, 1 beta' and 1 omega subunit. When a sigma factor is associated with the core the holoenzyme is formed, which can initiate transcription.

It carries out the reaction RNA(n) + a ribonucleoside 5'-triphosphate = RNA(n+1) + diphosphate. Its function is as follows. Promotes RNA polymerase assembly. Latches the N- and C-terminal regions of the beta' subunit thereby facilitating its interaction with the beta and alpha subunits. The polypeptide is DNA-directed RNA polymerase subunit omega (Dinoroseobacter shibae (strain DSM 16493 / NCIMB 14021 / DFL 12)).